We begin with the raw amino-acid sequence, 368 residues long: DNA replication and repair protein RecF (368 aa).

30-37 contributes to the ATP binding site; that stretch reads GRNGSGKT.

This sequence belongs to the RecF family.

It localises to the cytoplasm. Functionally, the RecF protein is involved in DNA metabolism; it is required for DNA replication and normal SOS inducibility. RecF binds preferentially to single-stranded, linear DNA. It also seems to bind ATP. This Chlorobaculum tepidum (strain ATCC 49652 / DSM 12025 / NBRC 103806 / TLS) (Chlorobium tepidum) protein is DNA replication and repair protein RecF.